Reading from the N-terminus, the 206-residue chain is Cytidylate kinase (206 aa).

9–17 (GPAAAGKGT) serves as a coordination point for ATP.

This sequence belongs to the cytidylate kinase family. Type 1 subfamily.

The protein localises to the cytoplasm. It catalyses the reaction CMP + ATP = CDP + ADP. The enzyme catalyses dCMP + ATP = dCDP + ADP. This Cereibacter sphaeroides (strain ATCC 17023 / DSM 158 / JCM 6121 / CCUG 31486 / LMG 2827 / NBRC 12203 / NCIMB 8253 / ATH 2.4.1.) (Rhodobacter sphaeroides) protein is Cytidylate kinase.